Here is a 988-residue protein sequence, read N- to C-terminus: Bifunctional glutamine synthetase adenylyltransferase/adenylyl-removing enzyme (988 aa).

The tract at residues 1 to 472 (MTKRETVERR…RYSALFEQET (472 aa)) is adenylyl removase. The adenylyl transferase stretch occupies residues 476–988 (GEAGNLVFTG…AFVAVVKNGG (513 aa)).

It belongs to the GlnE family. It depends on Mg(2+) as a cofactor.

The catalysed reaction is [glutamine synthetase]-O(4)-(5'-adenylyl)-L-tyrosine + phosphate = [glutamine synthetase]-L-tyrosine + ADP. It catalyses the reaction [glutamine synthetase]-L-tyrosine + ATP = [glutamine synthetase]-O(4)-(5'-adenylyl)-L-tyrosine + diphosphate. Involved in the regulation of glutamine synthetase GlnA, a key enzyme in the process to assimilate ammonia. When cellular nitrogen levels are high, the C-terminal adenylyl transferase (AT) inactivates GlnA by covalent transfer of an adenylyl group from ATP to specific tyrosine residue of GlnA, thus reducing its activity. Conversely, when nitrogen levels are low, the N-terminal adenylyl removase (AR) activates GlnA by removing the adenylyl group by phosphorolysis, increasing its activity. The regulatory region of GlnE binds the signal transduction protein PII (GlnB) which indicates the nitrogen status of the cell. The protein is Bifunctional glutamine synthetase adenylyltransferase/adenylyl-removing enzyme of Agrobacterium fabrum (strain C58 / ATCC 33970) (Agrobacterium tumefaciens (strain C58)).